A 726-amino-acid polypeptide reads, in one-letter code: Probable dipeptidyl-peptidase 5 (726 aa).

Positions 1-19 (MGALQWLSITAAAASAVSA) are cleaved as a signal peptide. Residues N97, N153, N259, N398, N453, and N529 are each glycosylated (N-linked (GlcNAc...) asparagine). Catalysis depends on S564, which acts as the Charge relay system. The N-linked (GlcNAc...) asparagine glycan is linked to N611. Catalysis depends on charge relay system residues D647 and H679.

The protein belongs to the peptidase S9C family.

Its subcellular location is the secreted. Its function is as follows. Extracellular dipeptidyl-peptidase which removes N-terminal dipeptides sequentially from polypeptides having unsubstituted N-termini. This Aspergillus niger protein is Probable dipeptidyl-peptidase 5 (dpp5).